The sequence spans 887 residues: Alanine--tRNA ligase (887 aa).

Zn(2+) is bound by residues histidine 573, histidine 577, cysteine 676, and histidine 680.

It belongs to the class-II aminoacyl-tRNA synthetase family. Zn(2+) serves as cofactor.

It is found in the cytoplasm. The catalysed reaction is tRNA(Ala) + L-alanine + ATP = L-alanyl-tRNA(Ala) + AMP + diphosphate. Its function is as follows. Catalyzes the attachment of alanine to tRNA(Ala) in a two-step reaction: alanine is first activated by ATP to form Ala-AMP and then transferred to the acceptor end of tRNA(Ala). Also edits incorrectly charged Ser-tRNA(Ala) and Gly-tRNA(Ala) via its editing domain. The protein is Alanine--tRNA ligase of Corynebacterium jeikeium (strain K411).